The following is a 476-amino-acid chain: WD repeat, SAM and U-box domain-containing protein 1 (476 aa).

WD repeat units follow at residues 10-47 (DHGD…ELPH), 52-91 (FHTY…MLAV), 95-134 (PSGS…LYRC), 137-176 (VKDG…LHSE), 178-228 (AHDL…LGFE), 237-276 (GHCA…ILHT), and 279-318 (QHTR…LCQA). The 65-residue stretch at 332–396 (WSEEDVSTWL…LRKIEELRTK (65 aa)) folds into the SAM domain. The 74-residue stretch at 403 to 476 (GIPDEFICPI…INRWLETHQK (74 aa)) folds into the U-box domain. Position 458 is a phosphothreonine (Thr-458).

This Homo sapiens (Human) protein is WD repeat, SAM and U-box domain-containing protein 1 (WDSUB1).